Here is a 530-residue protein sequence, read N- to C-terminus: Tegument protein UL21 homolog (530 aa).

The protein belongs to the alphaherpesvirinae UL21 protein family. In terms of assembly, interacts (via C-terminus) with UL16.

It is found in the virion tegument. It localises to the host cytoplasm. The protein localises to the host nucleus. Functionally, may participate in DNA packaging/capsid maturation events. Promotes efficient incorporation of tegument proteins UL46, UL49, and US3 homologs into virions. May also play a role in capsid transport to the trans-Golgi network (TGN). The sequence is that of Tegument protein UL21 homolog from Equus caballus (Horse).